Reading from the N-terminus, the 955-residue chain is Villin-5 (955 aa).

Gelsolin-like repeat units lie at residues 29–111 (FKPV…DKFL), 152–218 (VHVK…VEDG), 274–339 (LLHE…TVMF), and 644–712 (HFTQ…GSEP). Disordered regions lie at residues 741–783 (KGGG…RVRV) and 801–895 (NSRN…GLPV). Positions 756–776 (PTYSGRSTVQDKSQRSRSMSF) are enriched in polar residues. The segment covering 817–836 (PKSATPDSSSAPSKSSATAS) has biased composition (low complexity). Residues 842–864 (DRPKSVKDGSELEKPKQEEDAKE) are compositionally biased toward basic and acidic residues. The span at 867-878 (NTMTSRVESLTI) shows a compositional bias: polar residues. The HP domain maps to 890–955 (DEGLPVYPYD…NRMKIALQLF (66 aa)).

Belongs to the villin/gelsolin family.

Its subcellular location is the cytoplasm. It is found in the cytoskeleton. In terms of biological role, ca(2+)-regulated actin-binding protein. Binds actin microfilaments (MFs). Involved in actin filament bundling, severing and capping. Caps the barbed end of actin filaments and is able to sever them in a calcium-dependent manner. This is Villin-5 from Oryza sativa subsp. japonica (Rice).